The sequence spans 181 residues: Large ribosomal subunit protein uL5 (181 aa).

This sequence belongs to the universal ribosomal protein uL5 family. As to quaternary structure, part of the 50S ribosomal subunit; part of the 5S rRNA/L5/L18/L25 subcomplex. Contacts the 5S rRNA and the P site tRNA. Forms a bridge to the 30S subunit in the 70S ribosome.

This is one of the proteins that bind and probably mediate the attachment of the 5S RNA into the large ribosomal subunit, where it forms part of the central protuberance. In the 70S ribosome it contacts protein S13 of the 30S subunit (bridge B1b), connecting the 2 subunits; this bridge is implicated in subunit movement. Contacts the P site tRNA; the 5S rRNA and some of its associated proteins might help stabilize positioning of ribosome-bound tRNAs. The polypeptide is Large ribosomal subunit protein uL5 (Baumannia cicadellinicola subsp. Homalodisca coagulata).